The sequence spans 385 residues: Branched-chain-amino-acid aminotransferase, cytosolic (385 aa).

Lysine 221 carries the post-translational modification N6-(pyridoxal phosphate)lysine.

Belongs to the class-IV pyridoxal-phosphate-dependent aminotransferase family. In terms of assembly, homodimer. The cofactor is pyridoxal 5'-phosphate. In terms of tissue distribution, expressed in muscles.

Its subcellular location is the cytoplasm. It carries out the reaction L-leucine + 2-oxoglutarate = 4-methyl-2-oxopentanoate + L-glutamate. It catalyses the reaction L-isoleucine + 2-oxoglutarate = (S)-3-methyl-2-oxopentanoate + L-glutamate. The catalysed reaction is L-valine + 2-oxoglutarate = 3-methyl-2-oxobutanoate + L-glutamate. Functionally, catalyzes the first reaction in the catabolism of the essential branched chain amino acids leucine, isoleucine, and valine. This is Branched-chain-amino-acid aminotransferase, cytosolic (BCAT1) from Ovis aries (Sheep).